The primary structure comprises 201 residues: Mediator of RNA polymerase II transcription subunit 22 (201 aa).

The stretch at 93–123 (SVNESINQRNQQLRTLREECDKKLIALRDDI) forms a coiled coil. The interval 182–201 (SQIHTPPHLNGHGAGMTEHT) is disordered.

The protein belongs to the Mediator complex subunit 22 family. Component of the Mediator complex.

It localises to the nucleus. Its function is as follows. Component of the Mediator complex, a coactivator involved in the regulated transcription of nearly all RNA polymerase II-dependent genes. Mediator functions as a bridge to convey information from gene-specific regulatory proteins to the basal RNA polymerase II transcription machinery. Mediator is recruited to promoters by direct interactions with regulatory proteins and serves as a scaffold for the assembly of a functional preinitiation complex with RNA polymerase II and the general transcription factors. The chain is Mediator of RNA polymerase II transcription subunit 22 (med22) from Xenopus laevis (African clawed frog).